Consider the following 72-residue polypeptide: Probable movement protein p8 (72 aa).

Positions 16-58 (GRARSVEGKKHNGSGLTGVKRHAVSETSQKSQQGTGNGTMTNI) are disordered. The segment covering 40-58 (SETSQKSQQGTGNGTMTNI) has biased composition (polar residues).

This sequence belongs to the carmovirus/necrovirus/panicovirus movement protein p8 family.

In terms of biological role, cell-to-cell movement. This Tobacco necrosis virus (strain A) (TNV-A) protein is Probable movement protein p8.